The primary structure comprises 607 residues: UvrABC system protein C (607 aa).

Residues 16 to 94 (GRPGVYRMFD…IKEWRPPYNI (79 aa)) form the GIY-YIG domain. A UVR domain is found at 203–238 (NALTDELSGAMEQAASTLDFERAAELRDQISLLRRV).

This sequence belongs to the UvrC family. As to quaternary structure, interacts with UvrB in an incision complex.

The protein localises to the cytoplasm. Its function is as follows. The UvrABC repair system catalyzes the recognition and processing of DNA lesions. UvrC both incises the 5' and 3' sides of the lesion. The N-terminal half is responsible for the 3' incision and the C-terminal half is responsible for the 5' incision. The polypeptide is UvrABC system protein C (Pseudomonas fluorescens (strain SBW25)).